The primary structure comprises 430 residues: Phosphoserine aminotransferase 1, chloroplastic (430 aa).

The N-terminal 51 residues, 1 to 51, are a transit peptide targeting the chloroplast; sequence MAATTNSFLVGSNNTQIPALKPKSSSQSFLHLSKPNTVNFVSKTKPVAVRC. N-acetylvaline is present on Val52. Position 111 (Arg111) interacts with L-glutamate. Pyridoxal 5'-phosphate-binding positions include 145–146, Trp171, Thr221, Asp241, and Gln264; that span reads AT. N6-(pyridoxal phosphate)lysine is present on Lys265. 306–307 contacts pyridoxal 5'-phosphate; that stretch reads NT.

It belongs to the class-V pyridoxal-phosphate-dependent aminotransferase family. SerC subfamily. Homodimer. Requires pyridoxal 5'-phosphate as cofactor. As to expression, ubiquitous, but expressed preferentially in light-grown roots and shoots. Detected in root meristems and in root tissues surrounding the vascular bundle.

The protein localises to the plastid. It is found in the chloroplast. The catalysed reaction is O-phospho-L-serine + 2-oxoglutarate = 3-phosphooxypyruvate + L-glutamate. It catalyses the reaction 4-(phosphooxy)-L-threonine + 2-oxoglutarate = (R)-3-hydroxy-2-oxo-4-phosphooxybutanoate + L-glutamate. It participates in amino-acid biosynthesis; L-serine biosynthesis; L-serine from 3-phospho-D-glycerate: step 2/3. The protein operates within cofactor biosynthesis; pyridoxine 5'-phosphate biosynthesis; pyridoxine 5'-phosphate from D-erythrose 4-phosphate: step 3/5. Inhibited by high concentration of cysteine and by 3-phosphonooxypyruvate. Not inhibited by serine, threonine, valine, glycine, tryptophan and O-acetyl-L-serine. Involved in the plastidial phosphorylated pathway of serine biosynthesis (PPSB). Catalyzes the reversible conversion of 3-phosphohydroxypyruvate to phosphoserine. The polypeptide is Phosphoserine aminotransferase 1, chloroplastic (Arabidopsis thaliana (Mouse-ear cress)).